A 606-amino-acid chain; its full sequence is Large subunit GTPase 1 homolog (606 aa).

Residues 1–21 (MGKKNKGGAPNLGRQLIKDRF) are disordered. In terms of domain architecture, CP-type G spans 165–395 (WRQLWRVVER…LCDCPGLVMP (231 aa)). 213 to 216 (NKSD) lines the GTP pocket. 2 positions are modified to phosphoserine: S276 and S279. GTP-binding positions include 344-351 (GYPNVGKS) and 388-391 (DCPG). The tract at residues 574-606 (LVAGNDPAAKPWRHVKKERREKLRKKFSHLDEH) is disordered. The segment covering 584–600 (PWRHVKKERREKLRKKF) has biased composition (basic residues).

The protein belongs to the TRAFAC class YlqF/YawG GTPase family. LSG1 subfamily. As to expression, expressed in larval serotonergic neurons.

The protein localises to the cytoplasm. GTPase required for the nuclear export of the 60S ribosomal subunit. Probably acts by mediating the release of Nmd3 from the 60S ribosomal subunit after export into the cytoplasm. Regulator of body size; acts in serotonergic neurons to regulate insulin signaling and thus exerts global growth control. This is Large subunit GTPase 1 homolog (Ns3) from Drosophila melanogaster (Fruit fly).